The primary structure comprises 156 residues: Ribosomal RNA large subunit methyltransferase H (156 aa).

S-adenosyl-L-methionine-binding positions include leucine 73, glycine 104, and 123–128 (LSALTL).

It belongs to the RNA methyltransferase RlmH family. As to quaternary structure, homodimer.

It is found in the cytoplasm. The enzyme catalyses pseudouridine(1915) in 23S rRNA + S-adenosyl-L-methionine = N(3)-methylpseudouridine(1915) in 23S rRNA + S-adenosyl-L-homocysteine + H(+). Its function is as follows. Specifically methylates the pseudouridine at position 1915 (m3Psi1915) in 23S rRNA. The chain is Ribosomal RNA large subunit methyltransferase H from Shewanella denitrificans (strain OS217 / ATCC BAA-1090 / DSM 15013).